The sequence spans 231 residues: Potassium/proton antiporter CemA (231 aa).

3 helical membrane passes run 9 to 29 (FIPLLYLTSIVFLPWWVSFLF), 116 to 136 (IICFIILSGYSILSNEELIIL), and 191 to 211 (IISGLVSTFPVILDTIFKYWI).

This sequence belongs to the CemA family.

The protein localises to the plastid. Its subcellular location is the chloroplast inner membrane. The catalysed reaction is K(+)(in) + H(+)(out) = K(+)(out) + H(+)(in). Functionally, contributes to K(+)/H(+) antiport activity by supporting proton efflux to control proton extrusion and homeostasis in chloroplasts in a light-dependent manner to modulate photosynthesis. Prevents excessive induction of non-photochemical quenching (NPQ) under continuous-light conditions. Indirectly promotes efficient inorganic carbon uptake into chloroplasts. The chain is Potassium/proton antiporter CemA from Manihot esculenta (Cassava).